We begin with the raw amino-acid sequence, 256 residues long: 5'-nucleotidase SurE (256 aa).

4 residues coordinate a divalent metal cation: D8, D9, S40, and N92.

This sequence belongs to the SurE nucleotidase family. A divalent metal cation serves as cofactor.

The protein resides in the cytoplasm. It catalyses the reaction a ribonucleoside 5'-phosphate + H2O = a ribonucleoside + phosphate. Nucleotidase that shows phosphatase activity on nucleoside 5'-monophosphates. The sequence is that of 5'-nucleotidase SurE from Sinorhizobium medicae (strain WSM419) (Ensifer medicae).